Here is a 282-residue protein sequence, read N- to C-terminus: Caspase-3 (282 aa).

Active-site residues include H131 and C174.

Belongs to the peptidase C14A family. In terms of assembly, heterotetramer that consists of two anti-parallel arranged heterodimers, each one formed by a 17 kDa (p17) and a 12 kDa (p12) subunit.

It is found in the cytoplasm. It carries out the reaction Strict requirement for an Asp residue at positions P1 and P4. It has a preferred cleavage sequence of Asp-Xaa-Xaa-Asp-|- with a hydrophobic amino-acid residue at P2 and a hydrophilic amino-acid residue at P3, although Val or Ala are also accepted at this position.. Important mediator of apoptosis. At the onset of apoptosis, it proteolytically cleaves poly(ADP-ribose) polymerase PARP1 at a '216-Asp-|-Gly-217' bond. This chain is Caspase-3 (casp3), found in Xenopus laevis (African clawed frog).